A 60-amino-acid chain; its full sequence is LKCNQLIPPFWKTCPKGKNLCYKMTMRAAPMVPVKRGCIDVCPKSSLLIKYMCCNTNKCN.

4 cysteine pairs are disulfide-bonded: C3–C21, C14–C38, C42–C53, and C54–C59.

Belongs to the three-finger toxin family. Short-chain subfamily. Type IA cytotoxin sub-subfamily. Monomer in solution; Homodimer and oligomer in the presence of negatively charged lipids forming a pore with a size ranging between 20 and 30 Angstroms. In terms of tissue distribution, expressed by the venom gland.

Its subcellular location is the secreted. It is found in the target cell membrane. Its function is as follows. Shows cytolytic activity on many different cells by forming pore in lipid membranes. In vivo, increases heart rate or kills the animal by cardiac arrest. In addition, it binds to heparin with high affinity, interacts with Kv channel-interacting protein 1 (KCNIP1) in a calcium-independent manner, and binds to integrin alpha-V/beta-3 (ITGAV/ITGB3) with moderate affinity. This is Cytotoxin 1 from Naja mossambica (Mozambique spitting cobra).